The following is a 334-amino-acid chain: DnaJ protein homolog 1 (334 aa).

A J domain is found at 4 to 68 (DFYKILGLER…KKRDIFDNYG (65 aa)). Ser187 is modified (phosphoserine).

Its subcellular location is the cytoplasm. This is DnaJ protein homolog 1 (DnaJ-1) from Drosophila melanogaster (Fruit fly).